The primary structure comprises 752 residues: Granule-bound starch synthase 2, chloroplastic/amyloplastic (752 aa).

The transit peptide at 1–57 directs the protein to the chloroplast; that stretch reads MMLSLGSDATVLPFHAKNLKFTPKLSTLNGDLAFSKGLGVGRLNCGSVRLNHKQHVR. Disordered stretches follow at residues 116–146 and 224–253; these read LEGN…SGSA and FENF…EKPP. Residue K275 participates in ADP-alpha-D-glucose binding.

The protein belongs to the glycosyltransferase 1 family. Bacterial/plant glycogen synthase subfamily. Widely expressed.

The protein localises to the plastid. It is found in the chloroplast. Its subcellular location is the amyloplast. The enzyme catalyses [(1-&gt;4)-alpha-D-glucosyl](n) + ADP-alpha-D-glucose = [(1-&gt;4)-alpha-D-glucosyl](n+1) + ADP + H(+). Its pathway is glycan biosynthesis; starch biosynthesis. In Pisum sativum (Garden pea), this protein is Granule-bound starch synthase 2, chloroplastic/amyloplastic.